The primary structure comprises 531 residues: Transporter mfs1 (531 aa).

A run of 10 helical transmembrane segments spans residues 83–103 (LVVT…SAIF), 119–139 (VPVI…PLIF), 158–178 (LIVF…GVLL), 182–202 (FLAG…LADI), 214–234 (FWSL…AAMV), 241–261 (WQFW…TFFM), 325–345 (IYIG…PILF), 358–378 (LVYM…FIYL), 398–418 (ILII…WFGW), and 424–444 (VHWI…FLLF). N-linked (GlcNAc...) asparagine glycosylation is present at Asn-486. A helical membrane pass occupies residues 496–516 (GWGSTILGVISCIMIPIPFLI).

The protein belongs to the major facilitator superfamily. CAR1 family.

The protein localises to the endoplasmic reticulum. It is found in the membrane. The sequence is that of Transporter mfs1 (mfs1) from Schizosaccharomyces pombe (strain 972 / ATCC 24843) (Fission yeast).